The following is a 204-amino-acid chain: Dephospho-CoA kinase (204 aa).

A DPCK domain is found at 12–204 (RIGVTGGIAS…AWRDQISSIC (193 aa)). 20–25 (ASGKSS) provides a ligand contact to ATP.

Belongs to the CoaE family.

It is found in the cytoplasm. The enzyme catalyses 3'-dephospho-CoA + ATP = ADP + CoA + H(+). It functions in the pathway cofactor biosynthesis; coenzyme A biosynthesis; CoA from (R)-pantothenate: step 5/5. In terms of biological role, catalyzes the phosphorylation of the 3'-hydroxyl group of dephosphocoenzyme A to form coenzyme A. This Prochlorococcus marinus (strain MIT 9313) protein is Dephospho-CoA kinase.